We begin with the raw amino-acid sequence, 562 residues long: Tetratricopeptide repeat protein 39A (562 aa).

TPR repeat units lie at residues 273–306 (AIFL…QQNW), 463–496 (CVVK…EKRI), and 504–537 (PNAM…YKNY).

This sequence belongs to the TTC39 family.

The polypeptide is Tetratricopeptide repeat protein 39A (ttc39a) (Xenopus tropicalis (Western clawed frog)).